Here is a 226-residue protein sequence, read N- to C-terminus: Small ribosomal subunit protein uS2c (226 aa).

Belongs to the universal ribosomal protein uS2 family.

It localises to the plastid. The protein localises to the chloroplast. The sequence is that of Small ribosomal subunit protein uS2c (rps2) from Ostreococcus tauri.